The following is a 690-amino-acid chain: MPRVHAIEDYRNFGIMAHIDAGKTTTTERILYYTGKSHKIGEVHEGAATMDWMEQEQERGITITSAATTAFWNGKRLNIIDTPGHVDFTIEVERSLRVLDGAVVVLDGNQGVEPQTETVWRQGDKYRVPRIVFANKMDKTGADFYKCLQDIIDRLGAKPIAIQLPIGEESNFKGLVDLVRMKGVIWEDEALGANFKDIDIPADLVEKAKEYREKLVEAAVELDDEVLTAFLDGVEPDEATLKRLIRKAVLTSAFYPVLCGSAFKNKGVQPLLDAVVDYLPSPVDVPAIKGVDDDGNEIIRLPNDSEPLALLAFKIMDDPFVGTITFCRIYSGTLISGTGVVNSTRDRKERIGRMLLMHANNREDIKEAYAGDIVALAGLKEARTGDTLCDANKPVILEKMEFPEPVIEIAIEPKTKADQEKLGVALAKLAAEDPSFRVSTDLESGQTILKGMGELHLDIKVDILRRTYKVDANIGAPQVAFRERVTKKAEVDYTHKKQTGGTGQFARVKFIVEPNEPGKGFEFESKVVGGAVPKEYIPGVEKGLNSVLSSGVVAGFPVVDVKVTLIDGAYHDVDSSALAFEIASRAAFREALQKGKSVLLEPIMKVECVTPEDYTGSVIGDLNSRRGQIQGQDMRGNANVINAMVPLMNMFGYVNNLRSMSQGRATFTMQFDHYAEAPANVSAEVQKKFA.

Residues 8 to 283 (EDYRNFGIMA…AVVDYLPSPV (276 aa)) enclose the tr-type G domain. GTP is bound by residues 17-24 (AHIDAGKT), 81-85 (DTPGH), and 135-138 (NKMD).

The protein belongs to the TRAFAC class translation factor GTPase superfamily. Classic translation factor GTPase family. EF-G/EF-2 subfamily.

It localises to the cytoplasm. Its function is as follows. Catalyzes the GTP-dependent ribosomal translocation step during translation elongation. During this step, the ribosome changes from the pre-translocational (PRE) to the post-translocational (POST) state as the newly formed A-site-bound peptidyl-tRNA and P-site-bound deacylated tRNA move to the P and E sites, respectively. Catalyzes the coordinated movement of the two tRNA molecules, the mRNA and conformational changes in the ribosome. In Rhodopseudomonas palustris (strain BisB18), this protein is Elongation factor G.